The primary structure comprises 503 residues: Anaerobic nitric oxide reductase flavorubredoxin (503 aa).

The segment at 30–210 is zinc metallo-hydrolase; the sequence is LQGSSYNSYL…PFSRLVTAKI (181 aa). Fe cation-binding residues include His79, Glu81, Asp83, His147, Asp166, and His227. The region spanning 254-393 is the Flavodoxin-like domain; that stretch reads ITLFYDTMSN…ICREHGREIA (140 aa). FMN contacts are provided by residues 260–264 and 342–369; these read TMSNN and AFGS…ETTL. One can recognise a Rubredoxin-like domain in the interval 451–502; it reads NGCMQCSVCQWIYDPALGEPMQDVTPGTMWSDVPDSFLCPECGLGKDVFNPI. 4 residues coordinate Fe cation: Cys456, Cys459, Cys489, and Cys492.

In the N-terminal section; belongs to the zinc metallo-hydrolase group 3 family. As to quaternary structure, homotetramer. It depends on Fe cation as a cofactor. The cofactor is FMN.

It localises to the cytoplasm. It functions in the pathway nitrogen metabolism; nitric oxide reduction. Anaerobic nitric oxide reductase; uses NADH to detoxify nitric oxide (NO), protecting several 4Fe-4S NO-sensitive enzymes. Has at least 2 reductase partners, only one of which (NorW, flavorubredoxin reductase) has been identified. NO probably binds to the di-iron center; electrons enter from the NorW at rubredoxin and are transferred sequentially to the FMN center and the di-iron center. Also able to function as an aerobic oxygen reductase. This is Anaerobic nitric oxide reductase flavorubredoxin from Pectobacterium carotovorum subsp. carotovorum (strain PC1).